Reading from the N-terminus, the 437-residue chain is UDP-glucosyl transferase 79L3 (437 aa).

Catalysis depends on His-18, which acts as the Proton acceptor. The active-site Charge relay is Asp-117. Ser-254, Trp-312, Val-313, His-330, Ser-335, and Glu-338 together coordinate UDP.

Belongs to the UDP-glycosyltransferase family. In terms of tissue distribution, mainly expressed in flowers, flower buds and young leaves, and, to a lesser extent, in old leaves, stems and roots.

It participates in secondary metabolite biosynthesis; terpenoid biosynthesis. Functionally, component of the oleanane-type triterpene saponins (e.g. saponarioside A and saponarioside B) biosynthetic pathway, leading to the production of natural products with detergent properties used as traditional sources of soap. A glycosyltransferase that mediates the conversion of QA-triFR to QA-triFRX via the elongation of the C-28 sugar chain with a D-xylose. The polypeptide is UDP-glucosyl transferase 79L3 (Saponaria officinalis (Common soapwort)).